We begin with the raw amino-acid sequence, 252 residues long: 3-dehydroquinate dehydratase (252 aa).

3-dehydroquinate is bound by residues S21, 46–48, and R82; that span reads EWR. Catalysis depends on H143, which acts as the Proton donor/acceptor. K170 functions as the Schiff-base intermediate with substrate in the catalytic mechanism. 3 residues coordinate 3-dehydroquinate: R213, S232, and Q236.

This sequence belongs to the type-I 3-dehydroquinase family. As to quaternary structure, homodimer.

The catalysed reaction is 3-dehydroquinate = 3-dehydroshikimate + H2O. Its pathway is metabolic intermediate biosynthesis; chorismate biosynthesis; chorismate from D-erythrose 4-phosphate and phosphoenolpyruvate: step 3/7. Involved in the third step of the chorismate pathway, which leads to the biosynthesis of aromatic amino acids. Catalyzes the cis-dehydration of 3-dehydroquinate (DHQ) and introduces the first double bond of the aromatic ring to yield 3-dehydroshikimate. The polypeptide is 3-dehydroquinate dehydratase (Escherichia coli (strain SE11)).